Here is a 189-residue protein sequence, read N- to C-terminus: Homeobox protein HD-2 (189 aa).

Positions 119-181 (KPRTRANFPM…NARRRILPFM (63 aa)) form a DNA-binding region, homeobox; TALE-type.

The protein belongs to the TALE/KNOX homeobox family.

The protein resides in the nucleus. This Encephalitozoon cuniculi (strain GB-M1) (Microsporidian parasite) protein is Homeobox protein HD-2 (HD-2).